A 259-amino-acid chain; its full sequence is Aliphatic sulfonates import ATP-binding protein SsuB 1 (259 aa).

Residues 15–229 enclose the ABC transporter domain; the sequence is VECRRITRRF…QASTPGFQAL (215 aa). 47-54 serves as a coordination point for ATP; sequence GSSGSGKT.

This sequence belongs to the ABC transporter superfamily. Aliphatic sulfonates importer (TC 3.A.1.17.2) family. As to quaternary structure, the complex is composed of two ATP-binding proteins (SsuB), two transmembrane proteins (SsuC) and a solute-binding protein (SsuA).

The protein resides in the cell inner membrane. It carries out the reaction ATP + H2O + aliphatic sulfonate-[sulfonate-binding protein]Side 1 = ADP + phosphate + aliphatic sulfonateSide 2 + [sulfonate-binding protein]Side 1.. Part of the ABC transporter complex SsuABC involved in aliphatic sulfonates import. Responsible for energy coupling to the transport system. This chain is Aliphatic sulfonates import ATP-binding protein SsuB 1, found in Pseudomonas fluorescens (strain ATCC BAA-477 / NRRL B-23932 / Pf-5).